Here is a 462-residue protein sequence, read N- to C-terminus: U2 small nuclear ribonucleoprotein auxiliary factor 35 kDa subunit-related protein 2 (462 aa).

Residues 1–13 (METAGATADATAG) are compositionally biased toward low complexity. Disordered regions lie at residues 1-22 (METAGATADATAGPQKLSRKKY), 44-66 (AELAQKEEEEDPLAEEKRLEEER), and 115-138 (WEEQQRKEREEEEQKRQEKREREE). A Glycyl lysine isopeptide (Lys-Gly) (interchain with G-Cter in SUMO2) cross-link involves residue lysine 49. Basic and acidic residues predominate over residues 57–66 (AEEKRLEEER). The C3H1-type 1 zinc-finger motif lies at 170–198 (EKDRANCPFYSKTGACRFGDRCSRKHNFP). The RRM domain maps to 202–308 (PTLLIKGMFT…RQLQCEFCPV (107 aa)). The C3H1-type 2 zinc finger occupies 310–337 (RWKMAICGLFEVQQCPRGKHCNFLHVFR). Serine 353 is modified (phosphoserine). A disordered region spans residues 354 to 462 (PDWTSSSFGK…QPQPQPQSDP (109 aa)). A compositionally biased stretch (basic and acidic residues) spans 364–379 (NSERRERASHYDEYYG). A Phosphoserine modification is found at serine 389. The segment covering 392–403 (FYKRNGESDRKS) has biased composition (basic and acidic residues). Residues 404-417 (SSRHRVKKSHRYGM) are compositionally biased toward basic residues.

As to quaternary structure, component of the U11/U12 snRNPs that are part of the U12-type spliceosome. Interacts (via RS domain) with SRSF1 and SRSF2. Interacts with U2AF2/U2AF65. Phosphorylated in the RS domain by SRPK1.

The protein resides in the nucleus. Its function is as follows. Pre-mRNA-binding protein required for splicing of both U2- and U12-type introns. Selectively interacts with the 3'-splice site of U2- and U12-type pre-mRNAs and promotes different steps in U2 and U12 intron splicing. Recruited to U12 pre-mRNAs in an ATP-dependent manner and is required for assembly of the prespliceosome, a precursor to other spliceosomal complexes. For U2-type introns, it is selectively and specifically required for the second step of splicing. The chain is U2 small nuclear ribonucleoprotein auxiliary factor 35 kDa subunit-related protein 2 (Zrsr2) from Mus musculus (Mouse).